Here is a 173-residue protein sequence, read N- to C-terminus: Bifunctional protein PyrR (173 aa).

Residues 40–41 (TR), 97–105 (DDVLYTGRT), and Arg-130 contribute to the substrate site. Residues 93–105 (VILIDDVLYTGRT) carry the PRPP-binding motif.

This sequence belongs to the purine/pyrimidine phosphoribosyltransferase family. PyrR subfamily. Homodimer and homohexamer; in equilibrium.

The catalysed reaction is UMP + diphosphate = 5-phospho-alpha-D-ribose 1-diphosphate + uracil. In terms of biological role, regulates transcriptional attenuation of the pyrimidine nucleotide (pyr) operon by binding in a uridine-dependent manner to specific sites on pyr mRNA. This disrupts an antiterminator hairpin in the RNA and favors formation of a downstream transcription terminator, leading to a reduced expression of downstream genes. Also displays a weak uracil phosphoribosyltransferase activity which is not physiologically significant. The polypeptide is Bifunctional protein PyrR (Streptococcus pyogenes serotype M6 (strain ATCC BAA-946 / MGAS10394)).